The chain runs to 625 residues: Probable thymidylate synthase (625 aa).

Residues 224–323 (AVKNIDGQDD…PEPPVPFTSS (100 aa)) are disordered. Over residues 243–257 (EEYDDDDDDDVDDNE) the composition is skewed to acidic residues. Polar residues-rich tracts occupy residues 258–269 (QSNSMIETSANA) and 293–312 (SQAPLGSESVDTQASENVTT). Residues arginine 350 and 477–478 (RR) each bind dUMP. Residue cysteine 497 is the Nucleophile of the active site. DUMP is bound by residues 524–527 (RSAD), asparagine 535, and 565–567 (HIY). Aspartate 527 provides a ligand contact to (6R)-5,10-methylene-5,6,7,8-tetrahydrofolate.

This sequence in the N-terminal section; belongs to the HFCD (homo-oligomeric flavin containing Cys decarboxylase) superfamily. In the C-terminal section; belongs to the thymidylate synthase family.

Its subcellular location is the cytoplasm. It catalyses the reaction dUMP + (6R)-5,10-methylene-5,6,7,8-tetrahydrofolate = 7,8-dihydrofolate + dTMP. The protein operates within pyrimidine metabolism; dTTP biosynthesis. Functionally, required for both nuclear and mitochondrial DNA synthesis. The protein is Probable thymidylate synthase of Schizosaccharomyces pombe (strain 972 / ATCC 24843) (Fission yeast).